Here is a 208-residue protein sequence, read N- to C-terminus: Ribosomal RNA large subunit methyltransferase E (208 aa).

The S-adenosyl-L-methionine site is built by glycine 62, tryptophan 64, aspartate 82, aspartate 98, and aspartate 123. Lysine 163 functions as the Proton acceptor in the catalytic mechanism.

Belongs to the class I-like SAM-binding methyltransferase superfamily. RNA methyltransferase RlmE family.

It localises to the cytoplasm. It carries out the reaction uridine(2552) in 23S rRNA + S-adenosyl-L-methionine = 2'-O-methyluridine(2552) in 23S rRNA + S-adenosyl-L-homocysteine + H(+). In terms of biological role, specifically methylates the uridine in position 2552 of 23S rRNA at the 2'-O position of the ribose in the fully assembled 50S ribosomal subunit. This Mannheimia succiniciproducens (strain KCTC 0769BP / MBEL55E) protein is Ribosomal RNA large subunit methyltransferase E.